Consider the following 132-residue polypeptide: Interleukin-4 (132 aa).

The signal sequence occupies residues 1–24 (MGLTSQLIPTLVCLLALTSTFVHG). N-linked (GlcNAc...) asparagine glycans are attached at residues Asn-28, Asn-45, Asn-62, and Asn-101. 2 disulfides stabilise this stretch: Cys-48–Cys-84 and Cys-70–Cys-104.

This sequence belongs to the IL-4/IL-13 family.

It localises to the secreted. In terms of biological role, participates in at least several B-cell activation processes as well as of other cell types. It is a costimulator of DNA-synthesis. It induces the expression of class II MHC molecules on resting B-cells. It enhances both secretion and cell surface expression of IgE and IgG1. It also regulates the expression of the low affinity Fc receptor for IgE (CD23) on both lymphocytes and monocytes. Positively regulates IL31RA expression in macrophages. Stimulates autophagy in dendritic cells by interfering with mTORC1 signaling and through the induction of RUFY4. The polypeptide is Interleukin-4 (IL4) (Ailuropoda melanoleuca (Giant panda)).